A 150-amino-acid polypeptide reads, in one-letter code: Small heat shock protein IbpB (150 aa).

Residues 26 to 137 (SQEPIDFPPY…QPQRIAIGGG (112 aa)) form the sHSP domain.

Belongs to the small heat shock protein (HSP20) family. In terms of assembly, homodimer. Forms homomultimers of about 100-150 subunits at optimal growth temperatures. Conformation changes to oligomers at high temperatures or high ionic concentrations. The decrease in size of the multimers is accompanied by an increase in chaperone activity.

The protein resides in the cytoplasm. Its function is as follows. Associates with aggregated proteins, together with IbpA, to stabilize and protect them from irreversible denaturation and extensive proteolysis during heat shock and oxidative stress. Aggregated proteins bound to the IbpAB complex are more efficiently refolded and reactivated by the ATP-dependent chaperone systems ClpB and DnaK/DnaJ/GrpE. Its activity is ATP-independent. This chain is Small heat shock protein IbpB, found in Pectobacterium atrosepticum (strain SCRI 1043 / ATCC BAA-672) (Erwinia carotovora subsp. atroseptica).